A 167-amino-acid chain; its full sequence is uncharacterized protein (167 aa).

Positions 115–167 (SYRSQPQLGFKSTPPAHSSVFHHSVKAPKEDQAQEAASRPLTSQDGWNPNIKK) are disordered.

This is an uncharacterized protein from Homo sapiens (Human).